We begin with the raw amino-acid sequence, 188 residues long: Mitochondrial import receptor subunit TOM20-1 (188 aa).

The Cytoplasmic portion of the chain corresponds to methionine 1–glutamate 164. The helical transmembrane segment at lysine 165–isoleucine 182 threads the bilayer. At serine 183–arginine 188 the chain is on the mitochondrial intermembrane side.

The protein belongs to the Tom20 family. Forms part of the preprotein translocase complex of the outer mitochondrial membrane (TOM complex) which consists of at least 6 different proteins (TOM5, TOM6, TOM7, TOM20, TOM22/TOM9 and TOM40). Component of a mitochondrial large protein complex that contains, at least, MIC60, DGS1, TOM40, TOM20 proteins, and petC/RISP. Barely detected in roots.

The protein localises to the mitochondrion outer membrane. Functionally, central component of the receptor complex responsible for the recognition and translocation of cytosolically synthesized mitochondrial preproteins. Together with TOM22 functions as the transit peptide receptor at the surface of the mitochondrion outer membrane and facilitates the movement of preproteins into the translocation pore. In Arabidopsis thaliana (Mouse-ear cress), this protein is Mitochondrial import receptor subunit TOM20-1.